A 109-amino-acid polypeptide reads, in one-letter code: Nucleoid-associated protein BCB4264_A0025 (109 aa).

Belongs to the YbaB/EbfC family. Homodimer.

It is found in the cytoplasm. Its subcellular location is the nucleoid. Binds to DNA and alters its conformation. May be involved in regulation of gene expression, nucleoid organization and DNA protection. This chain is Nucleoid-associated protein BCB4264_A0025, found in Bacillus cereus (strain B4264).